Consider the following 416-residue polypeptide: CBL-interacting serine/threonine-protein kinase 21 (416 aa).

The 253-residue stretch at 12 to 264 (YEIGRTIGEG…AEIIIKDSWF (253 aa)) folds into the Protein kinase domain. ATP contacts are provided by residues 18 to 26 (IGEGNFAKV) and K41. The Proton acceptor role is filled by D134. An activation loop region spans residues 152 to 178 (DFGLSAVPKSGDMLSTACGSPCYIAPE). Phosphoserine is present on S156. The residue at position 167 (T167) is a Phosphothreonine. In terms of domain architecture, NAF spans 291 to 315 (ASSNFINAFQIIAMSSDLDLSGLFE). The tract at residues 321-351 (RYKTRIGSKNTAQETIKKIEAAATYVSLSVE) is PPI.

This sequence belongs to the protein kinase superfamily. CAMK Ser/Thr protein kinase family. SNF1 subfamily. Interacts with CBL9. Mn(2+) serves as cofactor.

It carries out the reaction L-seryl-[protein] + ATP = O-phospho-L-seryl-[protein] + ADP + H(+). The catalysed reaction is L-threonyl-[protein] + ATP = O-phospho-L-threonyl-[protein] + ADP + H(+). Its function is as follows. CIPK serine-threonine protein kinases interact with CBL proteins. Binding of a CBL protein to the regulatory NAF domain of CIPK protein lead to the activation of the kinase in a calcium-dependent manner. This is CBL-interacting serine/threonine-protein kinase 21 (CIPK21) from Arabidopsis thaliana (Mouse-ear cress).